Consider the following 343-residue polypeptide: Probable dual-specificity RNA methyltransferase RlmN (343 aa).

The active-site Proton acceptor is glutamate 92. The region spanning 98-328 is the Radical SAM core domain; it reads YHHGLTACIS…TTVRREMGAD (231 aa). Cysteine 105 and cysteine 333 are disulfide-bonded. The [4Fe-4S] cluster site is built by cysteine 112, cysteine 116, and cysteine 119. S-adenosyl-L-methionine-binding positions include 159–160, serine 191, 214–216, and asparagine 290; these read GE and SLH. Cysteine 333 (S-methylcysteine intermediate) is an active-site residue.

The protein belongs to the radical SAM superfamily. RlmN family. The cofactor is [4Fe-4S] cluster.

It is found in the cytoplasm. The catalysed reaction is adenosine(2503) in 23S rRNA + 2 reduced [2Fe-2S]-[ferredoxin] + 2 S-adenosyl-L-methionine = 2-methyladenosine(2503) in 23S rRNA + 5'-deoxyadenosine + L-methionine + 2 oxidized [2Fe-2S]-[ferredoxin] + S-adenosyl-L-homocysteine. It catalyses the reaction adenosine(37) in tRNA + 2 reduced [2Fe-2S]-[ferredoxin] + 2 S-adenosyl-L-methionine = 2-methyladenosine(37) in tRNA + 5'-deoxyadenosine + L-methionine + 2 oxidized [2Fe-2S]-[ferredoxin] + S-adenosyl-L-homocysteine. Its function is as follows. Specifically methylates position 2 of adenine 2503 in 23S rRNA and position 2 of adenine 37 in tRNAs. In Alkaliphilus oremlandii (strain OhILAs) (Clostridium oremlandii (strain OhILAs)), this protein is Probable dual-specificity RNA methyltransferase RlmN.